Here is a 1246-residue protein sequence, read N- to C-terminus: DNA-directed RNA polymerase subunit beta (1246 aa).

A disordered region spans residues 1171–1246; the sequence is IDDDAGEMSL…EFDGYNDFKA (76 aa). 2 stretches are compositionally biased toward acidic residues: residues 1202–1223 and 1230–1240; these read DEEEKDEDNDSEEALITEEDFE and EYAEDDDEFDG.

This sequence belongs to the RNA polymerase beta chain family. In terms of assembly, the RNAP catalytic core consists of 2 alpha, 1 beta, 1 beta' and 1 omega subunit. When a sigma factor is associated with the core the holoenzyme is formed, which can initiate transcription.

It catalyses the reaction RNA(n) + a ribonucleoside 5'-triphosphate = RNA(n+1) + diphosphate. DNA-dependent RNA polymerase catalyzes the transcription of DNA into RNA using the four ribonucleoside triphosphates as substrates. This is DNA-directed RNA polymerase subunit beta from Alkaliphilus metalliredigens (strain QYMF).